The sequence spans 395 residues: VEAAHLKTDIMSVFDDLTQDDQDSFRFLAVEGCAALGKLLEPQDCLAHILPVIVNFSQDKSWRVRYMVANQLYELCEAVGPDSTKTELVPAYVRLLRDNVAEVRIAAAGKVSKFSRILSPELAIQHILPCVKELSTDSSQHVRSALASVIMGMAPVLGKDATIEQLLPIFLSLLKDEFPDVRLNIISKLDQVNQVIGIDLLSQSLLPAIVELAEDRHWRVRLAIIEYIPLLASQLGVGFFDDKLGALIMQWLKDKEYSIRNAAANNVKRLAAEEFGPEWAMQHIIPQVLDMINDPHYLYRMTILHAISLLAPVLGSEITSTNLLPLVVNASKDRVPNIKFNVAKVLQSLIPIVDESVVESTIRPCLVELSEDPDVDVRFFASQALQSSDQVKMSS.

8 HEAT repeats span residues 44 to 81 (DCLA…AVGP), 83 to 120 (STKT…ILSP), 122 to 159 (LAIQ…VLGK), 161 to 198 (ATIE…VIGI), 200 to 237 (LLSQ…QLGV), 239 to 276 (FFDD…EEFG), 279 to 316 (WAMQ…VLGS), and 318 to 355 (ITST…IVDE).

The protein belongs to the phosphatase 2A regulatory subunit A family. In terms of assembly, PP2A exists in several trimeric forms, all of which consist of a core composed of a catalytic subunit associated with a 65 kDa regulatory subunit (PR65) (subunit A). The core complex associates with a third, variable subunit (subunit B), which confers distinct properties to the holoenzyme.

Its function is as follows. The PR65 subunit of protein phosphatase 2A serves as a scaffolding molecule to coordinate the assembly of the catalytic subunit and a variable regulatory B subunit. The polypeptide is Protein phosphatase PP2A regulatory subunit A (Pisum sativum (Garden pea)).